The chain runs to 1601 residues: Ras guanine nucleotide exchange factor glfB (1601 aa).

4 disordered regions span residues 43–140 (PLLA…KEWD), 188–256 (DLLI…TTTT), 310–461 (SPQR…APDS), and 475–630 (LTTT…VKKG). Residues 45–55 (LAPPAPPPPPT) show a composition bias toward pro residues. Residues 57 to 69 (QEINIGSGNSTFI) are compositionally biased toward polar residues. Over residues 70 to 126 (SSNNNNSNNNNNNNSNNNNNNNLNNSNNNNNNLNSNNNNNNNNNNNNNNGNNNNNSN) the composition is skewed to low complexity. Residue S197 is modified to Phosphoserine. T201 is modified (phosphothreonine). Composition is skewed to low complexity over residues 211–256 (QQQQ…TTTT) and 310–330 (SPQR…GVVV). Over residues 331–359 (ADEESDSSEEESDSSEEESDEYTDEESET) the composition is skewed to acidic residues. The segment covering 384 to 398 (PLTSVNSNDNTSSGT) has biased composition (polar residues). 3 stretches are compositionally biased toward low complexity: residues 435-458 (TAVA…TTVA), 475-493 (LTTT…TQSI), and 500-520 (SQQR…AITK). Residues 521–533 (PTKDAKDKKDPAK) are compositionally biased toward basic and acidic residues. The span at 558-577 (VPTGTSPPVSSSTSISSSTG) shows a compositional bias: low complexity. Over residues 578-596 (IKKDKVKLSKEEKDRIKKE) the composition is skewed to basic and acidic residues. The Rho-GAP domain maps to 649 to 836 (VRLTQLVLSN…LIIDNYVFLF (188 aa)). The N-terminal Ras-GEF domain occupies 851–983 (GKMIISEGSI…TINDFLKLPK (133 aa)). One can recognise a Ras-GEF domain in the interval 1021 to 1255 (SAMEIAEQCT…ADLSLKCEPP (235 aa)). Residues 1262–1601 (YNAPADIVDE…QESVPSTNAE (340 aa)) form an N-terminal F-actin-binding domain region. The tract at residues 1443 to 1474 (SNVEKEKLSSSQEQQEQQEQKQQEQQQQQQEP) is disordered. The span at 1465–1474 (QEQQQQQQEP) shows a compositional bias: low complexity.

Interacts with gpaB and rapA. Interacts directly with F-actin. Post-translationally, simultaneously phosphorylated at Ser-197 and Thr-201 after cAMP stimulation.

The protein resides in the cytoplasm. The protein localises to the cell cortex. It localises to the cytoskeleton. It is found in the cell projection. Its subcellular location is the filopodium. The protein resides in the lamellipodium. In terms of biological role, gpaB-activated, rapA-specific guanine nucleotide exchange factor, involved in the regulation of the balance between Ras and Rap signaling at the leading edge of chemotaxing cells. Spatially localized activation of Rap and Ras induces F-actin polymerization at the leading edge of chemotaxing cells through the Rac, PI3K, and TORC2 pathways. Also acts as a key regulator of actin-driven membrane protrusions during processes such as phagocytosis and cytokinesis, possibly by modulating rapA signaling pathways. The polypeptide is Ras guanine nucleotide exchange factor glfB (Dictyostelium discoideum (Social amoeba)).